The primary structure comprises 331 residues: Biotin synthase (331 aa).

Residues 52-277 form the Radical SAM core domain; that stretch reads PDVEVEGIIS…RTMLRFAGGR (226 aa). Residues C67, C71, and C74 each coordinate [4Fe-4S] cluster. C110, C143, C202, and R272 together coordinate [2Fe-2S] cluster.

It belongs to the radical SAM superfamily. Biotin synthase family. In terms of assembly, homodimer. It depends on [4Fe-4S] cluster as a cofactor. Requires [2Fe-2S] cluster as cofactor.

It carries out the reaction (4R,5S)-dethiobiotin + (sulfur carrier)-SH + 2 reduced [2Fe-2S]-[ferredoxin] + 2 S-adenosyl-L-methionine = (sulfur carrier)-H + biotin + 2 5'-deoxyadenosine + 2 L-methionine + 2 oxidized [2Fe-2S]-[ferredoxin]. It participates in cofactor biosynthesis; biotin biosynthesis; biotin from 7,8-diaminononanoate: step 2/2. Catalyzes the conversion of dethiobiotin (DTB) to biotin by the insertion of a sulfur atom into dethiobiotin via a radical-based mechanism. The sequence is that of Biotin synthase from Mycolicibacterium vanbaalenii (strain DSM 7251 / JCM 13017 / BCRC 16820 / KCTC 9966 / NRRL B-24157 / PYR-1) (Mycobacterium vanbaalenii).